The following is a 52-amino-acid chain: MNAVQDAQDQLTKLIRCWEPIDSDDLSKGYTMSDLVYQVSSYVPSPESYSTV.

This is an uncharacterized protein from Caenorhabditis elegans.